Here is a 44-residue protein sequence, read N- to C-terminus: Thymosin beta-4, Y-chromosomal (44 aa).

Positions 1 to 44 (MSDKPGMAEIEKFDKSKLKKTETQEKNPLSSKETIEQERQAGES) are disordered. 2 stretches are compositionally biased toward basic and acidic residues: residues 9 to 25 (EIEK…ETQE) and 33 to 44 (ETIEQERQAGES).

This sequence belongs to the thymosin beta family. As to expression, ubiquitous.

The protein resides in the cytoplasm. The protein localises to the cytoskeleton. Its function is as follows. Plays an important role in the organization of the cytoskeleton. Binds to and sequesters actin monomers (G actin) and therefore inhibits actin polymerization. In Homo sapiens (Human), this protein is Thymosin beta-4, Y-chromosomal (TMSB4Y).